A 360-amino-acid chain; its full sequence is Archaemetzincin-2 (360 aa).

H254 provides a ligand contact to Zn(2+). The Proton acceptor role is filled by E255. 6 residues coordinate Zn(2+): H258, H264, C265, C270, C289, and C292.

It belongs to the peptidase M54 family. Zn(2+) is required as a cofactor.

Its function is as follows. Probable zinc metalloprotease. This is Archaemetzincin-2 (AMZ2) from Pongo abelii (Sumatran orangutan).